We begin with the raw amino-acid sequence, 156 residues long: Probable low-salt glycan biosynthesis epimerase Agl13 (156 aa).

Residues Arg19, Glu24, 39-41, Arg51, His54, and His109 contribute to the substrate site; that span reads MSY.

The protein belongs to the dTDP-4-dehydrorhamnose 3,5-epimerase family.

Its pathway is protein modification; protein glycosylation. It participates in cell surface structure biogenesis; S-layer biogenesis. In terms of biological role, epimerase involved in N-glycan biosynthetic pathway that takes place under low-salt conditions (1.75 M instead of 3.4 M). Participates in the formation of the tetrasaccharide present at 'Asn-532' of S-layer glycoprotein Csg, consisting of a sulfated hexose, 2 hexoses and rhamnose. Involved in the addition of final rhamnose (sugar 4) of the tetrasaccharide on the dolichol phosphate carrier. In Haloferax volcanii (strain ATCC 29605 / DSM 3757 / JCM 8879 / NBRC 14742 / NCIMB 2012 / VKM B-1768 / DS2) (Halobacterium volcanii), this protein is Probable low-salt glycan biosynthesis epimerase Agl13 (agl13).